Reading from the N-terminus, the 257-residue chain is Imidazole glycerol phosphate synthase subunit HisF (257 aa).

Catalysis depends on residues Asp-11 and Asp-130.

Belongs to the HisA/HisF family. In terms of assembly, heterodimer of HisH and HisF.

The protein resides in the cytoplasm. The enzyme catalyses 5-[(5-phospho-1-deoxy-D-ribulos-1-ylimino)methylamino]-1-(5-phospho-beta-D-ribosyl)imidazole-4-carboxamide + L-glutamine = D-erythro-1-(imidazol-4-yl)glycerol 3-phosphate + 5-amino-1-(5-phospho-beta-D-ribosyl)imidazole-4-carboxamide + L-glutamate + H(+). It functions in the pathway amino-acid biosynthesis; L-histidine biosynthesis; L-histidine from 5-phospho-alpha-D-ribose 1-diphosphate: step 5/9. Functionally, IGPS catalyzes the conversion of PRFAR and glutamine to IGP, AICAR and glutamate. The HisF subunit catalyzes the cyclization activity that produces IGP and AICAR from PRFAR using the ammonia provided by the HisH subunit. This is Imidazole glycerol phosphate synthase subunit HisF from Trichormus variabilis (strain ATCC 29413 / PCC 7937) (Anabaena variabilis).